The primary structure comprises 541 residues: Chaperonin GroEL (541 aa).

Residues 29-32, 86-90, Gly413, 478-480, and Asp494 contribute to the ATP site; these read TIGP, DGTTT, and NAA.

This sequence belongs to the chaperonin (HSP60) family. In terms of assembly, forms a cylinder of 14 subunits composed of two heptameric rings stacked back-to-back. Interacts with the co-chaperonin GroES.

It is found in the cytoplasm. It carries out the reaction ATP + H2O + a folded polypeptide = ADP + phosphate + an unfolded polypeptide.. Together with its co-chaperonin GroES, plays an essential role in assisting protein folding. The GroEL-GroES system forms a nano-cage that allows encapsulation of the non-native substrate proteins and provides a physical environment optimized to promote and accelerate protein folding. This is Chaperonin GroEL from Oenococcus oeni (strain ATCC BAA-331 / PSU-1).